The primary structure comprises 137 residues: Protein cornichon homolog 4 (137 aa).

The next 3 helical transmembrane spans lie at 8–28 (LISFFFLIALVGIIVYQLVCL), 53–73 (FIVQGVLCVFYLLTGHWFMTL), and 113–133 (LAYIVLNLFLTIFWMIYSALD).

It belongs to the cornichon family.

Its subcellular location is the membrane. This is Protein cornichon homolog 4 from Arabidopsis thaliana (Mouse-ear cress).